The chain runs to 164 residues: Thiol peroxidase (164 aa).

Positions 18–163 (VSEGQHAPDF…FDAALEAYRN (146 aa)) constitute a Thioredoxin domain. Cys-60 serves as the catalytic Cysteine sulfenic acid (-SOH) intermediate. Cys-60 and Cys-93 are joined by a disulfide.

It belongs to the peroxiredoxin family. Tpx subfamily. Homodimer.

The enzyme catalyses a hydroperoxide + [thioredoxin]-dithiol = an alcohol + [thioredoxin]-disulfide + H2O. Its function is as follows. Thiol-specific peroxidase that catalyzes the reduction of hydrogen peroxide and organic hydroperoxides to water and alcohols, respectively. Plays a role in cell protection against oxidative stress by detoxifying peroxides. This chain is Thiol peroxidase, found in Staphylococcus haemolyticus (strain JCSC1435).